Reading from the N-terminus, the 297-residue chain is Small ribosomal subunit protein uS2 (297 aa).

Positions 252–297 (GVPGTAFSAATAAPTSWEADGGDWAASSAAPAGESWAETQPAEAKW) are disordered. A compositionally biased stretch (low complexity) spans 256–289 (TAFSAATAAPTSWEADGGDWAASSAAPAGESWAE).

The protein belongs to the universal ribosomal protein uS2 family. Component of the small ribosomal subunit. Mature ribosomes consist of a small (40S) and a large (60S) subunit. The 40S subunit contains about 33 different proteins and 1 molecule of RNA (18S). The 60S subunit contains about 49 different proteins and 3 molecules of RNA (25S, 5.8S and 5S). Interacts with rps21.

It is found in the cytoplasm. Required for the assembly and/or stability of the 40S ribosomal subunit. Required for the processing of the 20S rRNA-precursor to mature 18S rRNA in a late step of the maturation of 40S ribosomal subunits. The chain is Small ribosomal subunit protein uS2 (rps0) from Aspergillus fumigatus (strain CBS 144.89 / FGSC A1163 / CEA10) (Neosartorya fumigata).